The chain runs to 341 residues: Cell division protein FtsX (341 aa).

The disordered stretch occupies residues 1 to 34 (MSTTRTPKVSERVAPKPADPQPAKKKRGEDDDGP). The Cytoplasmic segment spans residues 1-65 (MSTTRTPKVS…RRLGKQPIGS (65 aa)). The chain crosses the membrane as a helical span at residues 66 to 86 (FFTCLVMAVALSMPMGLSLLL). Residues 87 to 212 (KNIEQLGGSW…LAAILKLGDR (126 aa)) lie on the Periplasmic side of the membrane. A helical transmembrane segment spans residues 213–233 (FVFGLAVMLISALLLVIGNTI). Residues 234 to 263 (RLHIENRRIEIEVIKLVGGTDAYVRRPFLY) are Cytoplasmic-facing. A helical membrane pass occupies residues 264 to 284 (MGALYGLGAGLLAWGILAFGL). At 285 to 311 (NWLNEAVVGLSGLYGSDFALGGVPASD) the chain is on the periplasmic side. The chain crosses the membrane as a helical span at residues 312 to 332 (GLSLLIGAVLLGYIGAWIAVA). Topologically, residues 333–341 (RHLNELAPR) are cytoplasmic.

The protein belongs to the ABC-4 integral membrane protein family. FtsX subfamily. Forms a membrane-associated complex with FtsE.

It is found in the cell inner membrane. Part of the ABC transporter FtsEX involved in cellular division. In Pseudomonas putida (Arthrobacter siderocapsulatus), this protein is Cell division protein FtsX.